The primary structure comprises 248 residues: 3-deoxy-manno-octulosonate cytidylyltransferase (248 aa).

Belongs to the KdsB family.

It is found in the cytoplasm. It carries out the reaction 3-deoxy-alpha-D-manno-oct-2-ulosonate + CTP = CMP-3-deoxy-beta-D-manno-octulosonate + diphosphate. The protein operates within nucleotide-sugar biosynthesis; CMP-3-deoxy-D-manno-octulosonate biosynthesis; CMP-3-deoxy-D-manno-octulosonate from 3-deoxy-D-manno-octulosonate and CTP: step 1/1. It functions in the pathway bacterial outer membrane biogenesis; lipopolysaccharide biosynthesis. Its function is as follows. Activates KDO (a required 8-carbon sugar) for incorporation into bacterial lipopolysaccharide in Gram-negative bacteria. This chain is 3-deoxy-manno-octulosonate cytidylyltransferase, found in Shigella boydii serotype 18 (strain CDC 3083-94 / BS512).